A 131-amino-acid polypeptide reads, in one-letter code: Cyclin-dependent kinase 4 inhibitor B (131 aa).

4 ANK repeats span residues 6-35 (GGDA…DPNR), 39-67 (FGRR…DPNC), 72-101 (TLTR…RLDV), and 105-131 (WGRL…TAGD).

Belongs to the CDKN2 cyclin-dependent kinase inhibitor family. As to quaternary structure, heterodimer of CDKN2B with CDK4 or CDK6.

Interacts strongly with CDK4 and CDK6. Potent inhibitor. Potential effector of TGF-beta induced cell cycle arrest. In Bos taurus (Bovine), this protein is Cyclin-dependent kinase 4 inhibitor B (CDKN2B).